The primary structure comprises 89 residues: Small ribosomal subunit protein uS15 (89 aa).

It belongs to the universal ribosomal protein uS15 family. As to quaternary structure, part of the 30S ribosomal subunit. Forms a bridge to the 50S subunit in the 70S ribosome, contacting the 23S rRNA.

One of the primary rRNA binding proteins, it binds directly to 16S rRNA where it helps nucleate assembly of the platform of the 30S subunit by binding and bridging several RNA helices of the 16S rRNA. In terms of biological role, forms an intersubunit bridge (bridge B4) with the 23S rRNA of the 50S subunit in the ribosome. The polypeptide is Small ribosomal subunit protein uS15 (Corynebacterium kroppenstedtii (strain DSM 44385 / JCM 11950 / CIP 105744 / CCUG 35717)).